The sequence spans 478 residues: NADH-ubiquinone oxidoreductase 49 kDa subunit, mitochondrial (478 aa).

The N-terminal 42 residues, 1–42, are a transit peptide targeting the mitochondrion; it reads MATTLFRLAGRNAKRHCMRQSTTIAHNLNSTRAFSASALRRY. The [4Fe-4S] cluster site is built by cysteine 341, cysteine 347, and cysteine 362.

It belongs to the complex I 49 kDa subunit family. Complex I is composed of about 40 different subunits. It depends on [4Fe-4S] cluster as a cofactor.

Its subcellular location is the mitochondrion inner membrane. It catalyses the reaction a ubiquinone + NADH + 5 H(+)(in) = a ubiquinol + NAD(+) + 4 H(+)(out). In terms of biological role, core subunit of the mitochondrial membrane respiratory chain NADH dehydrogenase (Complex I) that is believed to belong to the minimal assembly required for catalysis. Complex I functions in the transfer of electrons from NADH to the respiratory chain. The immediate electron acceptor for the enzyme is believed to be ubiquinone. The sequence is that of NADH-ubiquinone oxidoreductase 49 kDa subunit, mitochondrial (nuo-49) from Neurospora crassa (strain ATCC 24698 / 74-OR23-1A / CBS 708.71 / DSM 1257 / FGSC 987).